Consider the following 352-residue polypeptide: D-arabitol-phosphate dehydrogenase (352 aa).

Positions 43, 65, 96, 99, 102, 110, and 151 each coordinate Mn(2+).

This sequence belongs to the zinc-containing alcohol dehydrogenase family. In terms of assembly, homotetramer. The cofactor is Mn(2+).

The enzyme catalyses D-arabinitol 1-phosphate + NAD(+) = D-xylulose 5-phosphate + NADH + H(+). Inhibited by EDTA, 4-hydroxymercuribenzoic acid (PHMB), mercury and zinc ions at a concentration of 2 mM. Involved in the arabitol catabolism via the arabitol phosphate route. Catalyzes only the transformation of D-arabitol 1-phosphate (Arb1P) and D-arabitol 5-phosphate (Arb5P) into D-xylulose 5-phosphate (Xlu5P) and ribulose 5-phosphate, respectively. It can use both NAD and NADP. In Enterococcus avium (Streptococcus avium), this protein is D-arabitol-phosphate dehydrogenase.